The chain runs to 358 residues: Homoserine O-acetyltransferase (358 aa).

An AB hydrolase-1 domain is found at 52–337 (NVILICHALT…DEPYGHDAFL (286 aa)). The active-site Nucleophile is the serine 148. Residue arginine 217 coordinates substrate. Residues aspartate 304 and histidine 333 contribute to the active site. Aspartate 334 is a binding site for substrate.

It belongs to the AB hydrolase superfamily. MetX family. In terms of assembly, homodimer.

It is found in the cytoplasm. It catalyses the reaction L-homoserine + acetyl-CoA = O-acetyl-L-homoserine + CoA. It functions in the pathway amino-acid biosynthesis; L-methionine biosynthesis via de novo pathway; O-acetyl-L-homoserine from L-homoserine: step 1/1. In terms of biological role, transfers an acetyl group from acetyl-CoA to L-homoserine, forming acetyl-L-homoserine. The sequence is that of Homoserine O-acetyltransferase from Chlorobium luteolum (strain DSM 273 / BCRC 81028 / 2530) (Pelodictyon luteolum).